A 196-amino-acid chain; its full sequence is Carnitine operon protein CaiE (196 aa).

Positions 173 to 196 (TQPLRQMEENRPRLQGTTDVTPKR) are disordered. Positions 187 to 196 (QGTTDVTPKR) are enriched in polar residues.

Belongs to the transferase hexapeptide repeat family.

It participates in amine and polyamine metabolism; carnitine metabolism. In terms of biological role, overproduction of CaiE stimulates the activity of CaiB and CaiD. The sequence is that of Carnitine operon protein CaiE from Escherichia coli O6:K15:H31 (strain 536 / UPEC).